Consider the following 412-residue polypeptide: Putative pectate lyase 11 (412 aa).

The first 24 residues, 1-24 (MVSYSNNHFAYAFLLLLTIGNTLA), serve as a signal peptide directing secretion. Residues Asp-210, Asp-234, and Asp-238 each contribute to the Ca(2+) site. Arg-290 is a catalytic residue.

It belongs to the polysaccharide lyase 1 family. Ca(2+) serves as cofactor.

The enzyme catalyses Eliminative cleavage of (1-&gt;4)-alpha-D-galacturonan to give oligosaccharides with 4-deoxy-alpha-D-galact-4-enuronosyl groups at their non-reducing ends.. It functions in the pathway glycan metabolism; pectin degradation; 2-dehydro-3-deoxy-D-gluconate from pectin: step 2/5. This is Putative pectate lyase 11 from Arabidopsis thaliana (Mouse-ear cress).